A 142-amino-acid polypeptide reads, in one-letter code: Large ribosomal subunit protein uL16 (142 aa).

This sequence belongs to the universal ribosomal protein uL16 family. Part of the 50S ribosomal subunit.

Its function is as follows. Binds 23S rRNA and is also seen to make contacts with the A and possibly P site tRNAs. The polypeptide is Large ribosomal subunit protein uL16 (Pseudothermotoga lettingae (strain ATCC BAA-301 / DSM 14385 / NBRC 107922 / TMO) (Thermotoga lettingae)).